The sequence spans 159 residues: NADH-quinone oxidoreductase subunit I (159 aa).

4Fe-4S ferredoxin-type domains follow at residues 51-80 and 90-119; these read RRYENGEERCIACKLCEAICPAQAIVIEAD and TRYDIDMTKCIYCGLCQEACPVDAIVEGPN. [4Fe-4S] cluster is bound by residues Cys60, Cys63, Cys66, Cys70, Cys99, Cys102, Cys105, and Cys109.

The protein belongs to the complex I 23 kDa subunit family. As to quaternary structure, NDH-1 is composed of 14 different subunits. Subunits NuoA, H, J, K, L, M, N constitute the membrane sector of the complex. It depends on [4Fe-4S] cluster as a cofactor.

It localises to the cell inner membrane. The enzyme catalyses a quinone + NADH + 5 H(+)(in) = a quinol + NAD(+) + 4 H(+)(out). In terms of biological role, NDH-1 shuttles electrons from NADH, via FMN and iron-sulfur (Fe-S) centers, to quinones in the respiratory chain. The immediate electron acceptor for the enzyme in this species is believed to be ubiquinone. Couples the redox reaction to proton translocation (for every two electrons transferred, four hydrogen ions are translocated across the cytoplasmic membrane), and thus conserves the redox energy in a proton gradient. The sequence is that of NADH-quinone oxidoreductase subunit I from Rickettsia conorii (strain ATCC VR-613 / Malish 7).